The following is a 78-amino-acid chain: Pigment-dispersing hormone 1 peptides (78 aa).

An N-terminal signal peptide occupies residues 1 to 22 (MRSSVIVAVLVVVALAALLTQG). Position 75 is an alanine amide (A75).

The protein belongs to the arthropod PDH family. Eyestalk sinus gland.

The protein resides in the secreted. Its function is as follows. The pigment-dispersing hormone causes the migration of the distal retinal pigment into the proximal end of the pigment chromatophore cells and thus decreases the amount of light entering the retinulas. May also function as a neurotransmitter and/or neuromodulator. In Callinectes sapidus (Blue crab), this protein is Pigment-dispersing hormone 1 peptides (PDH1).